Reading from the N-terminus, the 561-residue chain is Glutamine--tRNA ligase (561 aa).

Positions Pro-34–His-44 match the 'HIGH' region motif. Residues Glu-35 to Asn-37 and His-41 to Ser-47 each bind ATP. Positions 67 and 212 each coordinate L-glutamine. Residues Thr-231, Arg-261 to Leu-262, and Met-269 to Lys-271 each bind ATP. Positions Val-268 to Arg-272 match the 'KMSKS' region motif.

Belongs to the class-I aminoacyl-tRNA synthetase family. As to quaternary structure, monomer.

The protein resides in the cytoplasm. The catalysed reaction is tRNA(Gln) + L-glutamine + ATP = L-glutaminyl-tRNA(Gln) + AMP + diphosphate. In Idiomarina loihiensis (strain ATCC BAA-735 / DSM 15497 / L2-TR), this protein is Glutamine--tRNA ligase.